The primary structure comprises 392 residues: HORMA domain-containing protein 1 (392 aa).

Positions 25-227 (HQSLMFVKRL…TPFHTFRLKV (203 aa)) constitute an HORMA domain. Residues 323–359 (SELDVSESKTRSGKIFQSKMVNGNNQQGQTSKENRKR) form a disordered region. Over residues 341-353 (KMVNGNNQQGQTS) the composition is skewed to polar residues. The residue at position 375 (Ser-375) is a Phosphoserine. Residues 381–384 (KKRR) carry the Nuclear localization signal motif.

Interacts with HORMAD2. Interacts with IHO1. Phosphorylated at Ser-375 in a SPO11-dependent manner. As to expression, specifically expressed in meiotic germ cells.

The protein localises to the nucleus. Its subcellular location is the chromosome. It is found in the cytoplasm. Its function is as follows. Plays a key role in meiotic progression. Regulates 3 different functions during meiosis: ensures that sufficient numbers of processed DNA double-strand breaks (DSBs) are available for successful homology search by increasing the steady-state numbers of single-stranded DSB ends. Promotes synaptonemal-complex formation independently of its role in homology search. Plays a key role in the male mid-pachytene checkpoint and the female meiotic prophase checkpoint: required for efficient build-up of ATR activity on unsynapsed chromosome regions, a process believed to form the basis of meiotic silencing of unsynapsed chromatin (MSUC) and meiotic prophase quality control in both sexes. The protein is HORMA domain-containing protein 1 of Mus musculus (Mouse).